Here is an 87-residue protein sequence, read N- to C-terminus: Acyl-CoA-binding protein (87 aa).

Position 2 is an N-acetylserine (Ser2). Residues Ser2 to Ile87 form the ACB domain. Lys8 is subject to N6-acetyllysine; alternate. At Lys8 the chain carries N6-succinyllysine; alternate. Lys14 contributes to the an acyl-CoA binding site. The residue at position 17 (Lys17) is an N6-succinyllysine. N6-acetyllysine is present on Lys19. Tyr29 is subject to Phosphotyrosine. An acyl-CoA is bound by residues Tyr29–Lys33, Lys51, Lys55, and Tyr74. Position 51 is an N6-acetyllysine (Lys51). N6-acetyllysine; alternate is present on Lys55. The residue at position 55 (Lys55) is an N6-succinyllysine; alternate. Residue Lys55 is modified to N6-(2-hydroxyisobutyryl)lysine; alternate. Lys55 is modified (N6-malonyllysine; alternate). Lys77 bears the N6-acetyllysine; alternate mark. At Lys77 the chain carries N6-succinyllysine; alternate.

This sequence belongs to the ACBP family. In terms of assembly, monomer.

Its subcellular location is the endoplasmic reticulum. It localises to the golgi apparatus. Functionally, binds medium- and long-chain acyl-CoA esters with very high affinity and may function as an intracellular carrier of acyl-CoA esters. It is also able to displace diazepam from the benzodiazepine (BZD) recognition site located on the GABA type A receptor. It is therefore possible that this protein also acts as a neuropeptide to modulate the action of the GABA receptor. This Bos taurus (Bovine) protein is Acyl-CoA-binding protein (DBI).